The primary structure comprises 187 residues: Adenine phosphoribosyltransferase (187 aa).

133 to 137 serves as a coordination point for AMP; the sequence is ATGGS.

Belongs to the purine/pyrimidine phosphoribosyltransferase family. As to quaternary structure, homodimer. Requires Mg(2+) as cofactor.

It localises to the cytoplasm. Its subcellular location is the nucleus. The catalysed reaction is AMP + diphosphate = 5-phospho-alpha-D-ribose 1-diphosphate + adenine. Its pathway is purine metabolism; AMP biosynthesis via salvage pathway; AMP from adenine: step 1/1. In terms of biological role, catalyzes a salvage reaction resulting in the formation of AMP, that is energically less costly than de novo synthesis. This Kluyveromyces lactis (strain ATCC 8585 / CBS 2359 / DSM 70799 / NBRC 1267 / NRRL Y-1140 / WM37) (Yeast) protein is Adenine phosphoribosyltransferase (APT1).